The sequence spans 504 residues: Maturase K (504 aa).

This sequence belongs to the intron maturase 2 family. MatK subfamily.

Its subcellular location is the plastid. The protein resides in the chloroplast. Functionally, usually encoded in the trnK tRNA gene intron. Probably assists in splicing its own and other chloroplast group II introns. In Chimaphila umbellata (Pipsissewa), this protein is Maturase K.